A 445-amino-acid chain; its full sequence is Serine/threonine-protein kinase Nek2 (445 aa).

The 264-residue stretch at tyrosine 8–isoleucine 271 folds into the Protein kinase domain. ATP contacts are provided by residues isoleucine 14–cysteine 22 and lysine 37. Aspartate 141 functions as the Proton acceptor in the catalytic mechanism. Phosphothreonine; by autocatalysis is present on threonine 170. Serine 171 bears the Phosphoserine; by autocatalysis mark. 2 positions are modified to phosphothreonine; by autocatalysis: threonine 175 and threonine 179. Serine 184 is subject to Phosphoserine. The residue at position 241 (serine 241) is a Phosphoserine; by autocatalysis. The segment at glutamate 264–arginine 445 is interaction with PCNT. A phosphoserine mark is found at serine 296 and serine 300. An interaction with CEP85 region spans residues proline 301–arginine 445. Positions leucine 303–lysine 362 form a coiled coil. The leucine-zipper stretch occupies residues leucine 306–leucine 334. The segment at glutamine 329 to arginine 445 is necessary for interaction with MAD1L1. A required for microtubule binding and for localization to the centrosomes region spans residues glutamate 333 to proline 370. Serine 356 and serine 365 each carry phosphoserine; by STK3/MST2. Phosphoserine occurs at positions 387, 390, 397, and 402. Positions glutamine 403–arginine 439 are interaction with SAV1 and STK3/MST2. A Phosphoserine; by STK3/MST2 modification is found at serine 406. Residues serine 406–isoleucine 430 adopt a coiled-coil conformation. Serine 428 carries the phosphoserine modification. Phosphoserine; by STK3/MST2 is present on serine 438.

Belongs to the protein kinase superfamily. NEK Ser/Thr protein kinase family. NIMA subfamily. In terms of assembly, isoform 1, isoform 2 and isoform 4 form homo- and heterodimers. Interacts with NECAB3 and HMGA2. Isoform 1 interacts with CDC20, CTNB1, MAD1L1, MAPK, NEK11, NPM1, NDC80, PCNT and SGO1. Isoform 1 interacts with STK3/MST2 (via SARAH domain) and SAV1 (via SARAH domain). Isoform 1 and isoform 2 interact with MAD2L1. Isoform 1 and isoform 4 interact with PPP1CA and PPP1CC. Interacts with CEP68; the interaction leads to phosphorylation of CEP68. Interacts with CNTLN; the interaction leads to phosphorylation of CNTLN. Isoform 1 interacts with CEP85. Interacts with CCDC102B; the interaction leads to phosphorylation of CCDC102B. It depends on Mg(2+) as a cofactor. In terms of processing, activated by autophosphorylation. Protein phosphatase 1 represses autophosphorylation and activation of isoform 1 by dephosphorylation. Phosphorylation by STK3/MST2 is necessary for its localization to the centrosome. Isoform 1 and isoform 2 are expressed in peripheral blood T-cells and a wide variety of transformed cell types. Isoform 1 and isoform 4 are expressed in the testis. Up-regulated in various cancer cell lines, as well as primary breast tumors.

The protein localises to the nucleus. It localises to the nucleolus. The protein resides in the cytoplasm. It is found in the cytoskeleton. Its subcellular location is the microtubule organizing center. The protein localises to the centrosome. It localises to the spindle pole. The protein resides in the chromosome. It is found in the centromere. Its subcellular location is the kinetochore. It carries out the reaction L-seryl-[protein] + ATP = O-phospho-L-seryl-[protein] + ADP + H(+). The catalysed reaction is L-threonyl-[protein] + ATP = O-phospho-L-threonyl-[protein] + ADP + H(+). Isoform 1 is inhibited by ionizing radiation in the presence of PPP1CA. Its catalytic activity is inhibited by the inhibitor CCT241950. In the presence of this inhibitor, displays an autoinhibited conformation: Tyr-70 side chain points into the active site, interacts with the activation loop, and blocks the alphaC helix. Functionally, protein kinase which is involved in the control of centrosome separation and bipolar spindle formation in mitotic cells and chromatin condensation in meiotic cells. Regulates centrosome separation (essential for the formation of bipolar spindles and high-fidelity chromosome separation) by phosphorylating centrosomal proteins such as CROCC, CEP250 and NINL, resulting in their displacement from the centrosomes. Regulates kinetochore microtubule attachment stability in mitosis via phosphorylation of NDC80. Involved in regulation of mitotic checkpoint protein complex via phosphorylation of CDC20 and MAD2L1. Plays an active role in chromatin condensation during the first meiotic division through phosphorylation of HMGA2. Phosphorylates: PPP1CC; SGO1; NECAB3 and NPM1. Essential for localization of MAD2L1 to kinetochore and MAPK1 and NPM1 to the centrosome. Phosphorylates CEP68 and CNTLN directly or indirectly. NEK2-mediated phosphorylation of CEP68 promotes CEP68 dissociation from the centrosome and its degradation at the onset of mitosis. Involved in the regulation of centrosome disjunction. Phosphorylates CCDC102B either directly or indirectly which causes CCDC102B to dissociate from the centrosome and allows for centrosome separation. Its function is as follows. Phosphorylates and activates NEK11 in G1/S-arrested cells. Not present in the nucleolus and, in contrast to isoform 1, does not phosphorylate and activate NEK11 in G1/S-arrested cells. The protein is Serine/threonine-protein kinase Nek2 (NEK2) of Homo sapiens (Human).